The sequence spans 154 residues: Putative pre-16S rRNA nuclease (154 aa).

The protein belongs to the YqgF nuclease family.

The protein localises to the cytoplasm. Its function is as follows. Could be a nuclease involved in processing of the 5'-end of pre-16S rRNA. This Rickettsia akari (strain Hartford) protein is Putative pre-16S rRNA nuclease.